A 379-amino-acid polypeptide reads, in one-letter code: UDP-4-amino-4-deoxy-L-arabinose--oxoglutarate aminotransferase (379 aa).

Position 182 is an N6-(pyridoxal phosphate)lysine (K182).

The protein belongs to the DegT/DnrJ/EryC1 family. ArnB subfamily. Homodimer. Pyridoxal 5'-phosphate serves as cofactor.

It catalyses the reaction UDP-4-amino-4-deoxy-beta-L-arabinose + 2-oxoglutarate = UDP-beta-L-threo-pentopyranos-4-ulose + L-glutamate. It participates in nucleotide-sugar biosynthesis; UDP-4-deoxy-4-formamido-beta-L-arabinose biosynthesis; UDP-4-deoxy-4-formamido-beta-L-arabinose from UDP-alpha-D-glucuronate: step 2/3. Its pathway is bacterial outer membrane biogenesis; lipopolysaccharide biosynthesis. In terms of biological role, catalyzes the conversion of UDP-4-keto-arabinose (UDP-Ara4O) to UDP-4-amino-4-deoxy-L-arabinose (UDP-L-Ara4N). The modified arabinose is attached to lipid A and is required for resistance to polymyxin and cationic antimicrobial peptides. The sequence is that of UDP-4-amino-4-deoxy-L-arabinose--oxoglutarate aminotransferase from Klebsiella pneumoniae subsp. pneumoniae (strain ATCC 700721 / MGH 78578).